Here is a 240-residue protein sequence, read N- to C-terminus: Uridylate kinase (240 aa).

An ATP-binding site is contributed by 13-16 (KLSG). Positions 21–26 (GDKGFG) are involved in allosteric activation by GTP. Gly-55 is a binding site for UMP. ATP contacts are provided by Gly-56 and Arg-60. Residues Asp-75 and 136-143 (IGNPYFST) each bind UMP. Residues Asn-164, Tyr-170, and Asp-173 each coordinate ATP.

This sequence belongs to the UMP kinase family. Homohexamer.

Its subcellular location is the cytoplasm. The catalysed reaction is UMP + ATP = UDP + ADP. The protein operates within pyrimidine metabolism; CTP biosynthesis via de novo pathway; UDP from UMP (UMPK route): step 1/1. With respect to regulation, allosterically activated by GTP. Inhibited by UTP. Its function is as follows. Catalyzes the reversible phosphorylation of UMP to UDP. The sequence is that of Uridylate kinase from Staphylococcus haemolyticus (strain JCSC1435).